The sequence spans 1349 residues: Protein turtle homolog B (1349 aa).

Residues 1–20 (MIWYVATFIASVIGTRGLAA) form the signal peptide. Residues 21 to 722 (EGAHGLREEP…DLTEDGLARP (702 aa)) are Extracellular-facing. 5 Ig-like domains span residues 24 to 129 (HGLR…HNGS), 139 to 226 (PTFT…LLVQ), 228 to 320 (PPFI…AYLT), 324 to 415 (PARV…ARLV), and 420 to 504 (PYFT…THLT). Disulfide bonds link Cys45/Cys113 and Cys161/Cys208. 2 N-linked (GlcNAc...) asparagine glycosylation sites follow: Asn241 and Asn258. Cystine bridges form between Cys250–Cys303, Cys346–Cys397, and Cys442–Cys488. Fibronectin type-III domains are found at residues 512–604 (APGS…TLAF) and 614–708 (LVTP…STDI). Residue Asn624 is glycosylated (N-linked (GlcNAc...) asparagine). A helical membrane pass occupies residues 723–743 (VLAGIVATICFLAAAILFSTL). Residues 744 to 1349 (AACFVNKQRK…SPPERALSKL (606 aa)) lie on the Cytoplasmic side of the membrane. Disordered regions lie at residues 758–817 (RKKD…EKEL), 911–1081 (QLTP…RGLP), and 1099–1349 (APKG…LSKL). Ser775, Ser783, and Ser794 each carry phosphoserine. The segment covering 911-921 (QLTPLSSSQES) has biased composition (polar residues). Over residues 985–998 (VPEVGSPLSSVMSS) the composition is skewed to low complexity. 3 stretches are compositionally biased toward polar residues: residues 1018 to 1033 (ENAS…TPTG), 1129 to 1141 (LVSQ…TSQG), and 1199 to 1214 (SRLS…SRTG). Omega-N-methylarginine is present on Arg1136. A phosphoserine mark is found at Ser1207 and Ser1215. A compositionally biased stretch (low complexity) spans 1251–1271 (STPSTGSPSQSSRSGSPSYRP). Over residues 1283–1292 (PSPPPGPAPA) the composition is skewed to pro residues.

The protein belongs to the immunoglobulin superfamily. Turtle family. As to quaternary structure, found in a complex with MAGI2 and NLGN2, where it interacts with MAGI2 (via PDZ 5 and PDZ 6 domains). In terms of processing, N-glycosylated and sialylated. Not significantly O-glycosylated.

The protein resides in the postsynaptic cell membrane. Its subcellular location is the postsynaptic density. Transmembrane protein which is abundantly expressed in interneurons, where it may regulate inhibitory synapse development. May mediate homophilic cell adhesion. In Homo sapiens (Human), this protein is Protein turtle homolog B (IGSF9B).